Here is a 228-residue protein sequence, read N- to C-terminus: THAP domain-containing protein 2 (228 aa).

The THAP-type zinc-finger motif lies at 1–80 (MPTNCAAAGC…LKMDAVPTIF (80 aa)). The HCFC1-binding motif (HBM) signature appears at 123–126 (EHSY).

This Homo sapiens (Human) protein is THAP domain-containing protein 2 (THAP2).